Here is a 598-residue protein sequence, read N- to C-terminus: Pantothenate kinase 1 (598 aa).

A disordered region spans residues Ala32–Ala161. A compositionally biased stretch (gly residues) spans Gly38 to Cys49. Residue Ser215 is modified to Phosphoserine. A Nucleolar localization signal motif is present at residues Lys218–Pro235. The Proton acceptor role is filled by Glu363. 3 residues coordinate acetyl-CoA: Ser417, Ser420, and Arg432.

This sequence belongs to the type II pantothenate kinase family. As to quaternary structure, homodimer. In terms of tissue distribution, expressed at high levels in brain, heart, kidney, liver, skeletal muscle and testis. As to expression, detected at much lower levels in kidney, liver, brain and testis and not detected in heart or skeletal muscle.

Its subcellular location is the cytoplasm. The protein localises to the nucleus. It localises to the nucleolus. It is found in the cytosol. The protein resides in the cytoplasmic vesicle. Its subcellular location is the clathrin-coated vesicle. The protein localises to the recycling endosome. It carries out the reaction (R)-pantothenate + ATP = (R)-4'-phosphopantothenate + ADP + H(+). The protein operates within cofactor biosynthesis; coenzyme A biosynthesis; CoA from (R)-pantothenate: step 1/5. With respect to regulation, regulated by feedback inhibition by CoA and its thioesters. In terms of biological role, catalyzes the phosphorylation of pantothenate to generate 4'-phosphopantothenate in the first and rate-determining step of coenzyme A (CoA) synthesis. The protein is Pantothenate kinase 1 (PANK1) of Homo sapiens (Human).